We begin with the raw amino-acid sequence, 354 residues long: Transcription factor BHLH3 (354 aa).

The tract at residues 124–143 (VAEEETSGDKALLHGGGGSS) is disordered. Residues 178 to 191 (GTPSKNLMAERRRR) form a basic motif region. The 50-residue stretch at 178–227 (GTPSKNLMAERRRRKRLNDRLSMLRSIVPKISKMDRTSILGDTIDYVKEL) folds into the bHLH domain. The tract at residues 192 to 227 (KRLNDRLSMLRSIVPKISKMDRTSILGDTIDYVKEL) is helix-loop-helix motif.

The protein belongs to the bHLH protein family. As to quaternary structure, interacts with LAX1. Phosphorylated by MAPK3 and MAPK6.

The protein resides in the nucleus. It is found in the cytoplasm. Its function is as follows. Transcription factor involved in defense responses that functions downstream of RAC1 and upstream of PAL1 and WRKY19 genes. The polypeptide is Transcription factor BHLH3 (Oryza sativa subsp. japonica (Rice)).